Consider the following 976-residue polypeptide: Probable outer membrane protein PmpA (976 aa).

The signal sequence occupies residues 1–50 (MNQVIKTIALCYQKYISRASNKTFSIHNTLSLSLLPKCLLGSLIIYTSHA). One can recognise an Autotransporter domain in the interval 671–976 (GNAIPNSLWS…SLSCGGYVGF (306 aa)).

The protein belongs to the PMP outer membrane protein family.

The protein resides in the secreted. It is found in the cell wall. It localises to the cell outer membrane. This Chlamydia muridarum (strain MoPn / Nigg) protein is Probable outer membrane protein PmpA (pmpA).